The sequence spans 444 residues: UDP-N-acetylglucosamine 1-carboxyvinyltransferase (444 aa).

Residue 22 to 23 (KN) coordinates phosphoenolpyruvate. Residue arginine 94 participates in UDP-N-acetyl-alpha-D-glucosamine binding. The active-site Proton donor is aspartate 119. Aspartate 309 and valine 331 together coordinate UDP-N-acetyl-alpha-D-glucosamine.

This sequence belongs to the EPSP synthase family. MurA subfamily.

The protein resides in the cytoplasm. It catalyses the reaction phosphoenolpyruvate + UDP-N-acetyl-alpha-D-glucosamine = UDP-N-acetyl-3-O-(1-carboxyvinyl)-alpha-D-glucosamine + phosphate. It functions in the pathway cell wall biogenesis; peptidoglycan biosynthesis. Cell wall formation. Adds enolpyruvyl to UDP-N-acetylglucosamine. The sequence is that of UDP-N-acetylglucosamine 1-carboxyvinyltransferase from Chlamydia trachomatis serovar D (strain ATCC VR-885 / DSM 19411 / UW-3/Cx).